We begin with the raw amino-acid sequence, 408 residues long: 2,3-bisphosphoglycerate-independent phosphoglycerate mutase 1 (408 aa).

The protein belongs to the BPG-independent phosphoglycerate mutase family. A-PGAM subfamily. Monomer. Requires Mn(2+) as cofactor.

The enzyme catalyses (2R)-2-phosphoglycerate = (2R)-3-phosphoglycerate. The protein operates within carbohydrate degradation; glycolysis; pyruvate from D-glyceraldehyde 3-phosphate: step 3/5. In terms of biological role, catalyzes the interconversion of 2-phosphoglycerate and 3-phosphoglycerate. The protein is 2,3-bisphosphoglycerate-independent phosphoglycerate mutase 1 (apgM1) of Archaeoglobus fulgidus (strain ATCC 49558 / DSM 4304 / JCM 9628 / NBRC 100126 / VC-16).